Reading from the N-terminus, the 232-residue chain is Translation initiation factor IF-3 (232 aa).

Disordered regions lie at residues 1-21 and 184-232; these read MAIQ…RTNR and LQSQ…AAQR. Residues 193–208 show a composition bias toward low complexity; sequence AAAAAAPAAAPAAGAP. Positions 209 to 222 are enriched in pro residues; that stretch reads APTPAPAPAAPAPA. Residues 223–232 are compositionally biased toward low complexity; it reads PAAADPAAQR.

Belongs to the IF-3 family. In terms of assembly, monomer.

The protein localises to the cytoplasm. Functionally, IF-3 binds to the 30S ribosomal subunit and shifts the equilibrium between 70S ribosomes and their 50S and 30S subunits in favor of the free subunits, thus enhancing the availability of 30S subunits on which protein synthesis initiation begins. This Anaeromyxobacter sp. (strain K) protein is Translation initiation factor IF-3.